The sequence spans 361 residues: Transmembrane protein 116 (361 aa).

7 helical membrane passes run 29–49 (WIQM…ILYA), 64–84 (FLLS…GLLF), 103–123 (TLYM…YTGL), 147–167 (LGPV…FVAG), 210–230 (CMAI…IFMG), 261–281 (MVLY…LATM), and 295–315 (VALY…NCLV).

It localises to the membrane. In Danio rerio (Zebrafish), this protein is Transmembrane protein 116 (tmem116).